Reading from the N-terminus, the 148-residue chain is Deoxyuridine 5'-triphosphate nucleotidohydrolase (148 aa).

Substrate contacts are provided by residues 67-69 (RSG), Asn80, 84-86 (LID), and Met94.

It belongs to the dUTPase family. Mg(2+) is required as a cofactor.

It carries out the reaction dUTP + H2O = dUMP + diphosphate + H(+). It functions in the pathway pyrimidine metabolism; dUMP biosynthesis; dUMP from dCTP (dUTP route): step 2/2. This enzyme is involved in nucleotide metabolism: it produces dUMP, the immediate precursor of thymidine nucleotides and it decreases the intracellular concentration of dUTP so that uracil cannot be incorporated into DNA. The chain is Deoxyuridine 5'-triphosphate nucleotidohydrolase from Burkholderia ambifaria (strain MC40-6).